The following is a 521-amino-acid chain: Exoglucanase 1 (521 aa).

An N-terminal signal peptide occupies residues 1–17; sequence MLAKFAALAALVASANA. Residues 18 to 450 are catalytic; it reads QAVCSLTAET…FGPIGSTFSG (433 aa). The N-linked (GlcNAc...) asparagine glycan is linked to N32. E229 functions as the Nucleophile in the catalytic mechanism. E234 (proton donor) is an active-site residue. N-linked (GlcNAc...) asparagine glycosylation is present at N287. The tract at residues 447-486 is disordered; that stretch reads TFSGGSSGTPPSNPSSSVKPVTSTAKPSSTSTASNPSGTG. Residues 451-485 are linker; that stretch reads GSSGTPPSNPSSSVKPVTSTAKPSSTSTASNPSGT. The CBM1 domain maps to 485 to 521; it reads TGAAHWAQCGGIGFSGPTTCQSPYTCQKINDYYSQCV. 2 cysteine pairs are disulfide-bonded: C493–C510 and C504–C520.

The protein belongs to the glycosyl hydrolase 7 (cellulase C) family.

The protein resides in the secreted. The catalysed reaction is Hydrolysis of (1-&gt;4)-beta-D-glucosidic linkages in cellulose and cellotetraose, releasing cellobiose from the non-reducing ends of the chains.. This Neurospora crassa (strain ATCC 24698 / 74-OR23-1A / CBS 708.71 / DSM 1257 / FGSC 987) protein is Exoglucanase 1 (cbh-1).